The sequence spans 1416 residues: MSGPWPSPDSRTKGTVAWLAEVLLWVGGSVVLSSEWQLGPLVERCMGAMQEGMQMVKLRGGSKGLVRFYYLDEHRSCIRWRPSRKNEKAKISIDSIQEVSEGRQSEVFQRYPDGSFDPNCCFSIYHGSHRESLDLVSTSSEVARTWVTGLRYLMAGISDEDSLARRQRTRDQWLKQTFDEADKNGDGSLSIGEVLQLLHKLNVNLPRQRVKQMFREADTDDHQGTLGFEEFCAFYKMMSTRRDLYLLMLTYSNHKDHLDAASLQRFLQVEQKMAGVTLESCQDIIEQFEPCPENKSKGLLGIDGFTNYTRSPAGDIFNPEHHHVHQDMTQPLSHYFITSSHNTYLVGDQLMSQSRVDMYAWVLQAGCRCVEVDCWDGPDGEPIVHHGYTLTSKILFKDVIETINKYAFIKNEYPVILSIENHCSVIQQKKMAQYLTDILGDKLDLSSVSSEDATTLPSPQMLKGKILVKGKKLPANISEDAEEGEVSDEDSADEIDDDCKLLNGDASTNRKRVENTAKRKLDSLIKESKIRDCEDPNNFSVSTLSPSGKLGRKSKAEEDVESGEDAGASRRNGRLVVGSFSRRKKKGSKLKKAASVEEGDEGQDSPGGQSRGATRQKKTMKLSRALSDLVKYTKSVATHDIEMEAASSWQVSSFSETKAHQILQQKPAQYLRFNQQQLSRIYPSSYRVDSSNYNPQPFWNAGCQMVALNYQSEGRMLQLNRAKFSANGGCGYVLKPGCMCQGVFNPNSEDPLPGQLKKQLVLRIISGQQLPKPRDSMLGDRGEIIDPFVEVEIIGLPVDCSREQTRVVDDNGFNPTWEETLVFMVHMPEIALVRFLVWDHDPIGRDFIGQRTLAFSSMMPGYRHVYLEGMEEASIFVHVAVSDISGKVKQALGLKGLFLRGPKPGSLDSHAAGRPPARPSVSQRILRRTASAPTKSQKPGRRGFPELVLGTRDTGSKGVADDVVPPGPGPAPEAPAQEGPGSGSPRDTRPLSTQRPLPPLCSLETIAEEPAPGPGPPPPAAVPTSSSQGRPPYPTGPGANVASPLEDTEEPRDSRPRPCNGEGAGGAYERAPGSQTDGRSQPRTLGHLPVIRRVKSEGQVPTEPLGGWRPLAAPFPAPAVYSDATGSDPLWQRLEPCGHRDSVSSSSSMSSSDTVIDLSLPSLGLGRSRENLAGAHMGRLPPRPHSASAARPDLPPVTKSKSNPNLRATGQRPPIPDELQPRSLAPRMAGLPFRPPWGCLSLVGVQDCPVAAKSKSLGDLTADDFAPSFEGGSRRLSHSLGLPGGTRRVSGPGVRRDTLTEQLRWLTVFQQAGDITSPTSLGPAGEGVAGGPGFVRRSSSRSHSRVRAIASRARQAQERQQRLQGLGRQGPPEEERGTPEGACSVGHEGSVDAPAPSKGALGPASAAAENLVLLRL.

Residues Met1–Ala155 form a necessary for plasma membrane localization region. In terms of domain architecture, PH spans Gly47–Ala155. 2 EF-hand domains span residues Thr169–Asn204 and Leu205–Arg241. Residues Asp182, Asn184, Asp186, Ser188, and Glu193 each contribute to the Ca(2+) site. A PI-PLC X-box domain is found at Gln326–Lys471. His341 is an active-site residue. Residues Asn342, Glu371, and Asp373 each coordinate Ca(2+). His385 is a catalytic residue. Position 420 (Glu420) interacts with Ca(2+). Substrate contacts are provided by Lys469 and Lys471. Phosphoserine is present on residues Ser487 and Ser491. A disordered region spans residues Asp535–Met620. The segment covering Asn537–Pro546 has biased composition (polar residues). The segment covering Ser581 to Lys592 has biased composition (basic residues). 2 positions are modified to phosphoserine: Ser595 and Ser605. In terms of domain architecture, PI-PLC Y-box spans Leu626 to Cys740. Substrate-binding residues include Ser653 and Arg680. The region spanning Cys740–Gly869 is the C2 domain. Positions 784, 786, 810, 839, 840, and 841 each coordinate Ca(2+). 3 disordered regions span residues Gly905–Arg1109, Tyr1121–Arg1222, and Ile1315–Ser1405. Residues Ala1011–Ala1021 show a composition bias toward pro residues. Over residues Gly1073–Arg1083 the composition is skewed to polar residues. Positions Val1143 to Gly1166 are enriched in low complexity. A compositionally biased stretch (polar residues) spans Lys1199–Ala1208. Residues Ala1324 to Gly1333 show a composition bias toward gly residues.

Requires Ca(2+) as cofactor. Expressed in retina and kidney.

It is found in the cytoplasm. The protein resides in the cell membrane. The enzyme catalyses a 1,2-diacyl-sn-glycero-3-phospho-(1D-myo-inositol-4,5-bisphosphate) + H2O = 1D-myo-inositol 1,4,5-trisphosphate + a 1,2-diacyl-sn-glycerol + H(+). Its activity is regulated as follows. Activity is stimulated by GNB1:GNG2. In terms of biological role, the production of the second messenger molecules diacylglycerol (DAG) and inositol 1,4,5-trisphosphate (IP3) is mediated by activated phosphatidylinositol-specific phospholipase C enzymes. This phospholipase activity is very sensitive to calcium. May be important for formation and maintenance of the neuronal network in the postnatal brain. The sequence is that of 1-phosphatidylinositol 4,5-bisphosphate phosphodiesterase eta-2 from Homo sapiens (Human).